The sequence spans 88 residues: Small ribosomal subunit protein bS20 (88 aa).

The segment covering 1–23 (MPNTKSAEKALRVADANRQENRR) has biased composition (basic and acidic residues). The segment at 1–29 (MPNTKSAEKALRVADANRQENRRAKSQVK) is disordered.

Belongs to the bacterial ribosomal protein bS20 family.

Binds directly to 16S ribosomal RNA. The polypeptide is Small ribosomal subunit protein bS20 (Dehalococcoides mccartyi (strain ATCC BAA-2100 / JCM 16839 / KCTC 5957 / BAV1)).